Consider the following 322-residue polypeptide: Aspartate carbamoyltransferase catalytic subunit (322 aa).

Residues arginine 65 and threonine 66 each contribute to the carbamoyl phosphate site. Lysine 93 contacts L-aspartate. Carbamoyl phosphate-binding residues include arginine 115, histidine 143, and glutamine 146. Positions 176 and 230 each coordinate L-aspartate. The carbamoyl phosphate site is built by glycine 271 and proline 272.

The protein belongs to the aspartate/ornithine carbamoyltransferase superfamily. ATCase family. Heterododecamer (2C3:3R2) of six catalytic PyrB chains organized as two trimers (C3), and six regulatory PyrI chains organized as three dimers (R2).

It carries out the reaction carbamoyl phosphate + L-aspartate = N-carbamoyl-L-aspartate + phosphate + H(+). It participates in pyrimidine metabolism; UMP biosynthesis via de novo pathway; (S)-dihydroorotate from bicarbonate: step 2/3. In terms of biological role, catalyzes the condensation of carbamoyl phosphate and aspartate to form carbamoyl aspartate and inorganic phosphate, the committed step in the de novo pyrimidine nucleotide biosynthesis pathway. In Brucella canis (strain ATCC 23365 / NCTC 10854 / RM-666), this protein is Aspartate carbamoyltransferase catalytic subunit.